The sequence spans 372 residues: Glutamate 5-kinase (372 aa).

Lys14 is a binding site for ATP. Positions 54, 141, and 153 each coordinate substrate. Position 173–174 (173–174 (TD)) interacts with ATP. Positions 280–358 (RGTLVLDDGA…ESIVRELGYM (79 aa)) constitute a PUA domain.

It belongs to the glutamate 5-kinase family.

The protein localises to the cytoplasm. It carries out the reaction L-glutamate + ATP = L-glutamyl 5-phosphate + ADP. It participates in amino-acid biosynthesis; L-proline biosynthesis; L-glutamate 5-semialdehyde from L-glutamate: step 1/2. In terms of biological role, catalyzes the transfer of a phosphate group to glutamate to form L-glutamate 5-phosphate. In Pseudomonas syringae pv. syringae (strain B728a), this protein is Glutamate 5-kinase.